Consider the following 311-residue polypeptide: tRNA pseudouridine synthase B (311 aa).

D39 functions as the Nucleophile in the catalytic mechanism. The segment at 237–268 is disordered; sequence RELSEQETTEISFGRRIAAGPGAGTPDAATAE. A compositionally biased stretch (low complexity) spans 254 to 268; it reads AAGPGAGTPDAATAE.

It belongs to the pseudouridine synthase TruB family. Type 1 subfamily.

It carries out the reaction uridine(55) in tRNA = pseudouridine(55) in tRNA. In terms of biological role, responsible for synthesis of pseudouridine from uracil-55 in the psi GC loop of transfer RNAs. This Paenarthrobacter aurescens (strain TC1) protein is tRNA pseudouridine synthase B.